Here is a 227-residue protein sequence, read N- to C-terminus: Small ribosomal subunit protein uS3 (227 aa).

Residues 39 to 108 (IRKFIEERYK…EVIVNVDEVK (70 aa)) form the KH type-2 domain.

It belongs to the universal ribosomal protein uS3 family. Part of the 30S ribosomal subunit. Forms a tight complex with proteins S10 and S14.

Functionally, binds the lower part of the 30S subunit head. Binds mRNA in the 70S ribosome, positioning it for translation. This chain is Small ribosomal subunit protein uS3, found in Sulfurihydrogenibium sp. (strain YO3AOP1).